We begin with the raw amino-acid sequence, 577 residues long: Jasmonoyl--L-amino acid synthetase JAR4 (577 aa).

Position 99 (Ser99) interacts with ATP. Residue Ser102 participates in jasmonate binding. Residues Met119, Thr122, Gly163, Asn168, and 331–336 (GSSEGW) contribute to the ATP site. Residue 166 to 170 (TTNVY) coordinates an L-alpha-amino acid. 328–331 (ADYG) serves as a coordination point for jasmonate. An an L-alpha-amino acid-binding site is contributed by 531–535 (KILDH).

The protein belongs to the IAA-amido conjugating enzyme family.

The catalysed reaction is a jasmonate + an L-alpha-amino acid + ATP = a jasmonyl-L-amino acid + AMP + diphosphate + H(+). Its function is as follows. Catalyzes the synthesis of jasmonate-amino acid conjugates by adenylation. Catalyzes the conjugation of jasmonate (JA) to Ile, Leu and Val. Catalyzes the conjugation of jasmonate (JA) to Ile to mediate defense signaling and resistance to the herbivore Manduca sexta caterpillars. This is Jasmonoyl--L-amino acid synthetase JAR4 from Nicotiana attenuata (Coyote tobacco).